The chain runs to 211 residues: Protein-lysine N-methyltransferase DDB_G0272708 (211 aa).

The protein belongs to the class I-like SAM-binding methyltransferase superfamily. EFM5 family.

The protein resides in the cytoplasm. Its function is as follows. S-adenosyl-L-methionine-dependent protein-lysine N-methyltransferase that methylates elongation factor 1-alpha. The sequence is that of Protein-lysine N-methyltransferase DDB_G0272708 from Dictyostelium discoideum (Social amoeba).